We begin with the raw amino-acid sequence, 53 residues long: MDSLSNYSNSLSSSGEISNKFAKIGSSILYGYYDYLTATSRVLHGEDKIKNTK.

This is an uncharacterized protein from Dictyostelium discoideum (Social amoeba).